The following is a 352-amino-acid chain: uncharacterized protein (352 aa).

8 helical membrane passes run 6-26, 30-50, 76-96, 151-171, 197-217, 226-246, 291-311, and 330-350; these read FIFLMFISIGILLLLLNIINP, FHIVEWKTIFSLFYLMVIINI, IFLTLFLSSLITNDVSLFVII, EFIINMIPFEIFGILAILPFL, FILVLLCVFGYLNFIYILPLI, VKVDYLFLLTFIFLFVDIEGL, WLPIAYGVNIGGNGTLIASFA, and LIGGIIYIMHLIVLVAYAKIF.

It belongs to the CitM (TC 2.A.11) transporter family.

Its subcellular location is the cell membrane. This is an uncharacterized protein from Methanocaldococcus jannaschii (strain ATCC 43067 / DSM 2661 / JAL-1 / JCM 10045 / NBRC 100440) (Methanococcus jannaschii).